The primary structure comprises 367 residues: Peptide chain release factor 2 (367 aa).

Gln254 is subject to N5-methylglutamine.

This sequence belongs to the prokaryotic/mitochondrial release factor family. Methylated by PrmC. Methylation increases the termination efficiency of RF2.

Its subcellular location is the cytoplasm. Peptide chain release factor 2 directs the termination of translation in response to the peptide chain termination codons UGA and UAA. This chain is Peptide chain release factor 2, found in Neisseria gonorrhoeae (strain ATCC 700825 / FA 1090).